The following is a 222-amino-acid chain: N-(5'-phosphoribosyl)anthranilate isomerase (222 aa).

Belongs to the TrpF family.

It catalyses the reaction N-(5-phospho-beta-D-ribosyl)anthranilate = 1-(2-carboxyphenylamino)-1-deoxy-D-ribulose 5-phosphate. It participates in amino-acid biosynthesis; L-tryptophan biosynthesis; L-tryptophan from chorismate: step 3/5. The sequence is that of N-(5'-phosphoribosyl)anthranilate isomerase from Gloeobacter violaceus (strain ATCC 29082 / PCC 7421).